A 576-amino-acid chain; its full sequence is Phosphoenolpyruvate-protein phosphotransferase (576 aa).

The Tele-phosphohistidine intermediate role is filled by His189. Residues Arg296 and Arg332 each contribute to the phosphoenolpyruvate site. Mg(2+) contacts are provided by Glu431 and Asp455. Residues 454–455 and Arg465 contribute to the phosphoenolpyruvate site; that span reads ND. Cys502 serves as the catalytic Proton donor.

This sequence belongs to the PEP-utilizing enzyme family. In terms of assembly, homodimer. Mg(2+) serves as cofactor.

The protein localises to the cytoplasm. The catalysed reaction is L-histidyl-[protein] + phosphoenolpyruvate = N(pros)-phospho-L-histidyl-[protein] + pyruvate. In terms of biological role, general (non sugar-specific) component of the phosphoenolpyruvate-dependent sugar phosphotransferase system (sugar PTS). This major carbohydrate active-transport system catalyzes the phosphorylation of incoming sugar substrates concomitantly with their translocation across the cell membrane. Enzyme I transfers the phosphoryl group from phosphoenolpyruvate (PEP) to the phosphoryl carrier protein (HPr). This chain is Phosphoenolpyruvate-protein phosphotransferase (ptsI), found in Buchnera aphidicola subsp. Baizongia pistaciae (strain Bp).